Here is a 90-residue protein sequence, read N- to C-terminus: Keratin-associated protein 19-1 (90 aa).

A 26 X 2 AA repeats of G-[YCGS] region spans residues 5-84 (GSYYGGLGYS…CCRPSYNGGY (80 aa)).

The protein belongs to the KRTAP type 19 family. In terms of assembly, interacts with hair keratins. In terms of tissue distribution, detected in the upper portion of the hair cortex.

In terms of biological role, in the hair cortex, hair keratin intermediate filaments are embedded in an interfilamentous matrix, consisting of hair keratin-associated proteins (KRTAP), which are essential for the formation of a rigid and resistant hair shaft through their extensive disulfide bond cross-linking with abundant cysteine residues of hair keratins. The matrix proteins include the high-sulfur and high-glycine-tyrosine keratins. This chain is Keratin-associated protein 19-1 (KRTAP19-1), found in Homo sapiens (Human).